Here is a 282-residue protein sequence, read N- to C-terminus: Energy-coupling factor transporter ATP-binding protein EcfA2 (282 aa).

An ABC transporter domain is found at 1–234 (MKGSPFEKVA…ADELVALGLD (234 aa)). 28–35 (GHTGSGKS) is an ATP binding site.

It belongs to the ABC transporter superfamily. Energy-coupling factor EcfA family. In terms of assembly, forms a stable energy-coupling factor (ECF) transporter complex composed of 2 membrane-embedded substrate-binding proteins (S component), 2 ATP-binding proteins (A component) and 2 transmembrane proteins (T component).

Its subcellular location is the cell membrane. ATP-binding (A) component of a common energy-coupling factor (ECF) ABC-transporter complex. Unlike classic ABC transporters this ECF transporter provides the energy necessary to transport a number of different substrates. This is Energy-coupling factor transporter ATP-binding protein EcfA2 from Halalkalibacterium halodurans (strain ATCC BAA-125 / DSM 18197 / FERM 7344 / JCM 9153 / C-125) (Bacillus halodurans).